The sequence spans 561 residues: Putative transport protein YbjL (561 aa).

Helical transmembrane passes span 8 to 28 (LLNG…LCLG), 32 to 52 (LGSI…LLGQ), 66 to 86 (FMLF…SIFF), 94 to 114 (MLAL…GKLF), and 158 to 178 (NLSL…IVGA). RCK C-terminal domains follow at residues 200 to 288 (RGLD…SFRN) and 292 to 373 (VFDR…RIGF). Helical transmembrane passes span 383–403 (LLAF…TFQF), 406–426 (FSFG…LGFL), 447–467 (FGLM…ISNG), 475–495 (MLIA…LFGA), and 540–560 (AIAN…WPGL).

This sequence belongs to the AAE transporter (TC 2.A.81) family. YbjL subfamily.

It is found in the cell membrane. This chain is Putative transport protein YbjL, found in Salmonella arizonae (strain ATCC BAA-731 / CDC346-86 / RSK2980).